Here is a 312-residue protein sequence, read N- to C-terminus: Putative endonuclease 4 (312 aa).

Positions 84, 127, 166, 202, 205, 239, 252, 254, and 284 each coordinate Zn(2+).

Belongs to the AP endonuclease 2 family. Zn(2+) is required as a cofactor.

The enzyme catalyses Endonucleolytic cleavage to 5'-phosphooligonucleotide end-products.. Endonuclease IV plays a role in DNA repair. It cleaves phosphodiester bonds at apurinic or apyrimidinic sites (AP sites) to produce new 5'-ends that are base-free deoxyribose 5-phosphate residues. The polypeptide is Putative endonuclease 4 (Acanthamoeba polyphaga (Amoeba)).